Consider the following 496-residue polypeptide: Glycerol kinase (496 aa).

Thr-11 is a binding site for ADP. The ATP site is built by Thr-11, Thr-12, and Ser-13. Position 11 (Thr-11) interacts with sn-glycerol 3-phosphate. Position 15 (Arg-15) interacts with ADP. Residues Arg-81, Glu-82, Tyr-133, and Asp-242 each coordinate sn-glycerol 3-phosphate. Glycerol contacts are provided by Arg-81, Glu-82, Tyr-133, Asp-242, and Gln-243. ADP is bound by residues Thr-264 and Gly-307. ATP contacts are provided by Thr-264, Gly-307, and Gln-311. Asn-413 contributes to the ADP binding site.

The protein belongs to the FGGY kinase family.

The enzyme catalyses glycerol + ATP = sn-glycerol 3-phosphate + ADP + H(+). Its pathway is polyol metabolism; glycerol degradation via glycerol kinase pathway; sn-glycerol 3-phosphate from glycerol: step 1/1. Its activity is regulated as follows. Inhibited by fructose 1,6-bisphosphate (FBP). Key enzyme in the regulation of glycerol uptake and metabolism. Catalyzes the phosphorylation of glycerol to yield sn-glycerol 3-phosphate. This is Glycerol kinase from Borrelia duttonii (strain Ly).